Reading from the N-terminus, the 409-residue chain is Elongation factor Tu, plastid (409 aa).

Residues 10–214 (KPHINIGTIG…SVDSYIPTPV (205 aa)) form the tr-type G domain. The G1 stretch occupies residues 19-26 (GHVDHGKT). 19–26 (GHVDHGKT) lines the GTP pocket. Thr-26 is a binding site for Mg(2+). The G2 stretch occupies residues 60–64 (GITIN). The interval 81 to 84 (DCPG) is G3. GTP contacts are provided by residues 81–85 (DCPGH) and 136–139 (NKED). Residues 136–139 (NKED) are G4. The segment at 174–176 (SAL) is G5.

Belongs to the TRAFAC class translation factor GTPase superfamily. Classic translation factor GTPase family. EF-Tu/EF-1A subfamily.

It localises to the plastid. It carries out the reaction GTP + H2O = GDP + phosphate + H(+). Functionally, GTP hydrolase that promotes the GTP-dependent binding of aminoacyl-tRNA to the A-site of ribosomes during protein biosynthesis. This Helicosporidium sp. subsp. Simulium jonesii (Green alga) protein is Elongation factor Tu, plastid (tufA).